The following is a 1482-amino-acid chain: Chromosome partition protein MukB (1482 aa).

34-41 serves as a coordination point for ATP; the sequence is GGNGAGKS. Coiled-coil stretches lie at residues 337 to 468, 509 to 604, 780 to 805, 835 to 1044, 1070 to 1115, and 1210 to 1265; these read LNLV…LSVA, QHLA…APIW, RAAR…ATLS, EAEI…ELVD, TNRA…TAKA, and EAIE…LQAV. The segment at 666–783 is flexible hinge; the sequence is PGGAEDQRLV…AVPLFGRAAR (118 aa).

Belongs to the SMC family. MukB subfamily. In terms of assembly, homodimerization via its hinge domain. Binds to DNA via its C-terminal region. Interacts, and probably forms a ternary complex, with MukE and MukF via its C-terminal region. The complex formation is stimulated by calcium or magnesium. Interacts with tubulin-related protein FtsZ.

The protein localises to the cytoplasm. It localises to the nucleoid. Functionally, plays a central role in chromosome condensation, segregation and cell cycle progression. Functions as a homodimer, which is essential for chromosome partition. Involved in negative DNA supercoiling in vivo, and by this means organize and compact chromosomes. May achieve or facilitate chromosome segregation by condensation DNA from both sides of a centrally located replisome during cell division. In Serratia proteamaculans (strain 568), this protein is Chromosome partition protein MukB.